The chain runs to 347 residues: Aspartate carbamoyltransferase catalytic subunit (347 aa).

Carbamoyl phosphate-binding residues include Arg-75 and Thr-76. Lys-103 contacts L-aspartate. Carbamoyl phosphate contacts are provided by Arg-125, His-153, and Gln-156. The L-aspartate site is built by Arg-193 and Arg-247. Gly-288 and Pro-289 together coordinate carbamoyl phosphate.

This sequence belongs to the aspartate/ornithine carbamoyltransferase superfamily. ATCase family. Heterododecamer (2C3:3R2) of six catalytic PyrB chains organized as two trimers (C3), and six regulatory PyrI chains organized as three dimers (R2).

It carries out the reaction carbamoyl phosphate + L-aspartate = N-carbamoyl-L-aspartate + phosphate + H(+). The protein operates within pyrimidine metabolism; UMP biosynthesis via de novo pathway; (S)-dihydroorotate from bicarbonate: step 2/3. In terms of biological role, catalyzes the condensation of carbamoyl phosphate and aspartate to form carbamoyl aspartate and inorganic phosphate, the committed step in the de novo pyrimidine nucleotide biosynthesis pathway. The sequence is that of Aspartate carbamoyltransferase catalytic subunit from Erythrobacter litoralis (strain HTCC2594).